A 462-amino-acid chain; its full sequence is Cysteine--tRNA ligase (462 aa).

Cysteine 27 is a binding site for Zn(2+). A 'HIGH' region motif is present at residues 29 to 39; it reads PTVYNYIHVGN. Zn(2+) contacts are provided by cysteine 209, histidine 234, and glutamate 238. The 'KMSKS' region motif lies at 266-270; the sequence is KMSKS. Lysine 269 contacts ATP.

The protein belongs to the class-I aminoacyl-tRNA synthetase family. Monomer. Zn(2+) is required as a cofactor.

The protein localises to the cytoplasm. The enzyme catalyses tRNA(Cys) + L-cysteine + ATP = L-cysteinyl-tRNA(Cys) + AMP + diphosphate. In Finegoldia magna (strain ATCC 29328 / DSM 20472 / WAL 2508) (Peptostreptococcus magnus), this protein is Cysteine--tRNA ligase.